We begin with the raw amino-acid sequence, 341 residues long: D-aspartate oxidase (341 aa).

FAD contacts are provided by Asp-36, Arg-37, Thr-43, Ser-44, Met-50, Gly-307, Ile-311, and Ser-312. The Microbody targeting signal motif lies at 339-341 (SKL).

It belongs to the DAMOX/DASOX family. Tetramer. Interacts with PEX5; the interaction is direct and required for localization of DDO to the peroxisome. FAD serves as cofactor. In terms of tissue distribution, expressed in liver and kidney (at protein level). In the brain, expressed in the frontal, temporal, and occipital lobes of the cortex, hippocampus, striatum, diencephalon, brainstem, cerebellum, spinal cord, plexus choroiderus and ependyma (at protein level). Also expressed in the lung, muscle, heart, spleen, small intestine and testis (at protein level).

It is found in the peroxisome matrix. It localises to the cytoplasm. Its subcellular location is the cytosol. The catalysed reaction is D-aspartate + O2 + H2O = oxaloacetate + H2O2 + NH4(+). It carries out the reaction D-glutamate + O2 + H2O = H2O2 + 2-oxoglutarate + NH4(+). Inhibited by aminooxyacetic acid, malonate, meso-tartrate and potassium bromide. Selectively catalyzes the oxidative deamination of acidic amino acids. Suppresses the level of D-aspartate in the brain, an amino acid that can act as an agonist for glutamate receptors. Protects the organism from the toxicity of D-amino acids. May also function in the intestine. The protein is D-aspartate oxidase of Rattus norvegicus (Rat).